The following is an 802-amino-acid chain: Protein SBE22 (802 aa).

2 disordered regions span residues 207–230 (SSTI…RSNS) and 323–345 (SGDP…QRHN).

The protein belongs to the SBE2 family.

It localises to the cytoplasm. Its subcellular location is the golgi apparatus. Its function is as follows. With SBE2, is involved in cell wall integrity and polarity processes like bud growth. This Vanderwaltozyma polyspora (strain ATCC 22028 / DSM 70294 / BCRC 21397 / CBS 2163 / NBRC 10782 / NRRL Y-8283 / UCD 57-17) (Kluyveromyces polysporus) protein is Protein SBE22 (SBE22).